A 235-amino-acid chain; its full sequence is 7-cyano-7-deazaguanine synthase (235 aa).

11 to 21 is a binding site for ATP; sequence FSGGQDSTTCV. Zn(2+) contacts are provided by C199, C214, C217, and C220.

The protein belongs to the QueC family. The cofactor is Zn(2+).

It carries out the reaction 7-carboxy-7-deazaguanine + NH4(+) + ATP = 7-cyano-7-deazaguanine + ADP + phosphate + H2O + H(+). It participates in purine metabolism; 7-cyano-7-deazaguanine biosynthesis. Its function is as follows. Catalyzes the ATP-dependent conversion of 7-carboxy-7-deazaguanine (CDG) to 7-cyano-7-deazaguanine (preQ(0)). This is 7-cyano-7-deazaguanine synthase from Janthinobacterium sp. (strain Marseille) (Minibacterium massiliensis).